We begin with the raw amino-acid sequence, 241 residues long: ATP synthase subunit a (241 aa).

Helical transmembrane passes span 30–50 (GQVF…VLVG), 89–109 (LPFI…GALI), 128–148 (INTT…AGLS), 193–213 (LAVG…VMLL), and 214–234 (GLFT…FYIG).

The protein belongs to the ATPase A chain family. F-type ATPases have 2 components, CF(1) - the catalytic core - and CF(0) - the membrane proton channel. CF(1) has five subunits: alpha(3), beta(3), gamma(1), delta(1), epsilon(1). CF(0) has four main subunits: a, b, b' and c.

It localises to the cellular thylakoid membrane. Its function is as follows. Key component of the proton channel; it plays a direct role in the translocation of protons across the membrane. This is ATP synthase subunit a from Synechococcus sp. (strain CC9902).